The following is a 494-amino-acid chain: Amidophosphoribosyltransferase (494 aa).

The propeptide occupies 1–10 (MFNYSGLNEE). Residue Cys-11 is the Nucleophile of the active site. The 221-residue stretch at 11 to 231 (CGVFGIWNHP…AGEYVVINDK (221 aa)) folds into the Glutamine amidotransferase type-2 domain. 3 residues coordinate Mg(2+): Ser-294, Asp-356, and Asp-357.

It in the C-terminal section; belongs to the purine/pyrimidine phosphoribosyltransferase family. Mg(2+) serves as cofactor.

It carries out the reaction 5-phospho-beta-D-ribosylamine + L-glutamate + diphosphate = 5-phospho-alpha-D-ribose 1-diphosphate + L-glutamine + H2O. It functions in the pathway purine metabolism; IMP biosynthesis via de novo pathway; N(1)-(5-phospho-D-ribosyl)glycinamide from 5-phospho-alpha-D-ribose 1-diphosphate: step 1/2. In terms of biological role, catalyzes the formation of phosphoribosylamine from phosphoribosylpyrophosphate (PRPP) and glutamine. This is Amidophosphoribosyltransferase from Staphylococcus aureus (strain MRSA252).